The primary structure comprises 482 residues: Arginine/ornithine antiporter (482 aa).

Residues 1 to 10 (MSQESSQKLR) are Cytoplasmic-facing. Residues 11 to 31 (LGALTALVVGSMIGGGIFSLP) form a helical membrane-spanning segment. The Periplasmic segment spans residues 32–40 (QNMAASADV). The chain crosses the membrane as a helical span at residues 41–61 (GAVLIGWAITAVGMLTLAFVF). The Cytoplasmic segment spans residues 62-100 (QTLANRKPELDGGVYAYAKAGFGDYMGFSSAWGYWISAW). Residues 101-121 (LGNVGYFVLLFSTLGYFFPIF) form a helical membrane-spanning segment. Over 122-124 (GKG) the chain is Periplasmic. The helical transmembrane segment at 125-145 (DTVAAIVCASVLLWALHFLVL) threads the bilayer. At 146–156 (RGIKEAAFINT) the chain is on the cytoplasmic side. Residues 157–177 (VTTVAKVVPLFLFILICLFAF) form a helical membrane-spanning segment. The Periplasmic portion of the chain corresponds to 178–202 (KLDIFTADIWGKSNPDLGSVMNQVR). A helical transmembrane segment spans residues 203-223 (NMMLVTVWVFIGIEGASIFSS). Residues 224-235 (RAEKRSDVGKAT) are Cytoplasmic-facing. Residues 236–256 (VIGFITVLLLLVLVNVLSMGV) traverse the membrane as a helical segment. Residues 257 to 283 (MTQPELAKLQNPSMALVLEHVVGHWGA) lie on the Periplasmic side of the membrane. The helical transmembrane segment at 284 to 304 (VLISVGLLISLLGALLSWVLL) threads the bilayer. Over 305–333 (CAEIMFAAAKDHTMPEFLRRENANQVPAN) the chain is Cytoplasmic. A helical membrane pass occupies residues 334 to 354 (ALWLTNICVQVFLVVVFFTSG). At 355-365 (DPDGMDPYTKM) the chain is on the periplasmic side. A helical transmembrane segment spans residues 366 to 386 (LLLATSMILIPYFWSAAYGLL). Residues 387–403 (LTLKGETYENDARERSK) are Cytoplasmic-facing. A helical transmembrane segment spans residues 404–424 (DLVIAGIAVAYAVWLLYAGGL). Position 425 (Lys425) is a topological domain, periplasmic. Residues 426 to 446 (YLLLSALLYAPGAILFAKAKH) form a helical membrane-spanning segment. Residues 447-458 (EVGQPIFTGIEK) lie on the Cytoplasmic side of the membrane. The chain crosses the membrane as a helical span at residues 459–479 (LIFAAVVIGALVAAYGLYDGF). Topologically, residues 480–482 (LTL) are periplasmic.

This sequence belongs to the amino acid-polyamine-organocation (APC) superfamily. Basic amino acid/polyamine antiporter (APA) (TC 2.A.3.2) family.

The protein localises to the cell inner membrane. It carries out the reaction L-ornithine(in) + L-arginine(out) = L-ornithine(out) + L-arginine(in). Catalyzes electroneutral exchange between arginine and ornithine to allow high-efficiency energy conversion in the arginine deiminase pathway. Also mediates the proton motive force-driven uptake of arginine and ornithine, but the exchange is several orders of magnitude faster than the proton motive force-driven transport. The sequence is that of Arginine/ornithine antiporter from Pseudomonas aeruginosa (strain ATCC 15692 / DSM 22644 / CIP 104116 / JCM 14847 / LMG 12228 / 1C / PRS 101 / PAO1).